We begin with the raw amino-acid sequence, 279 residues long: Lacto-N-neotetraose biosynthesis glycosyltransferase LgtB (279 aa).

It belongs to the glycosyltransferase 25 family.

It functions in the pathway glycan metabolism; lacto-N-neotetraose biosynthesis. The protein operates within bacterial outer membrane biogenesis; lipooligosaccharide biosynthesis. Adds the second galactose to the lacto-N-tetraose chain in lipooligosaccharide (LOS). In Neisseria gonorrhoeae, this protein is Lacto-N-neotetraose biosynthesis glycosyltransferase LgtB (lgtB).